Reading from the N-terminus, the 353-residue chain is Photosystem II protein D1 (353 aa).

Thr2 bears the N-acetylthreonine mark. Thr2 carries the phosphothreonine modification. Transmembrane regions (helical) follow at residues Tyr29–Ser46, His118–Leu133, and Trp142–Ala156. His118 provides a ligand contact to chlorophyll a. Tyr126 contributes to the pheophytin a binding site. [CaMn4O5] cluster contacts are provided by Asp170 and Glu189. A helical membrane pass occupies residues Phe197–Leu218. A chlorophyll a-binding site is contributed by His198. Residues His215 and Ser264–Phe265 contribute to the a quinone site. His215 provides a ligand contact to Fe cation. His272 contributes to the Fe cation binding site. Residues Phe274–Leu288 traverse the membrane as a helical segment. Residues His332, Glu333, Asp342, and Ala344 each contribute to the [CaMn4O5] cluster site. The propeptide occupies Ala345–Gly353.

Belongs to the reaction center PufL/M/PsbA/D family. As to quaternary structure, PSII is composed of 1 copy each of membrane proteins PsbA, PsbB, PsbC, PsbD, PsbE, PsbF, PsbH, PsbI, PsbJ, PsbK, PsbL, PsbM, PsbT, PsbX, PsbY, PsbZ, Psb30/Ycf12, at least 3 peripheral proteins of the oxygen-evolving complex and a large number of cofactors. It forms dimeric complexes. The cofactor is The D1/D2 heterodimer binds P680, chlorophylls that are the primary electron donor of PSII, and subsequent electron acceptors. It shares a non-heme iron and each subunit binds pheophytin, quinone, additional chlorophylls, carotenoids and lipids. D1 provides most of the ligands for the Mn4-Ca-O5 cluster of the oxygen-evolving complex (OEC). There is also a Cl(-1) ion associated with D1 and D2, which is required for oxygen evolution. The PSII complex binds additional chlorophylls, carotenoids and specific lipids.. Post-translationally, tyr-161 forms a radical intermediate that is referred to as redox-active TyrZ, YZ or Y-Z. In terms of processing, C-terminally processed by CTPA; processing is essential to allow assembly of the oxygen-evolving complex and thus photosynthetic growth.

Its subcellular location is the plastid membrane. It catalyses the reaction 2 a plastoquinone + 4 hnu + 2 H2O = 2 a plastoquinol + O2. In terms of biological role, photosystem II (PSII) is a light-driven water:plastoquinone oxidoreductase that uses light energy to abstract electrons from H(2)O, generating O(2) and a proton gradient subsequently used for ATP formation. It consists of a core antenna complex that captures photons, and an electron transfer chain that converts photonic excitation into a charge separation. The D1/D2 (PsbA/PsbD) reaction center heterodimer binds P680, the primary electron donor of PSII as well as several subsequent electron acceptors. The sequence is that of Photosystem II protein D1 from Cuscuta reflexa (Southern Asian dodder).